Reading from the N-terminus, the 210-residue chain is Redox-sensing transcriptional repressor Rex (210 aa).

Residues Lys17 to Phe56 constitute a DNA-binding region (H-T-H motif). Position 91–96 (Gly91–Gly96) interacts with NAD(+).

The protein belongs to the transcriptional regulatory Rex family. Homodimer.

The protein resides in the cytoplasm. In terms of biological role, modulates transcription in response to changes in cellular NADH/NAD(+) redox state. The sequence is that of Redox-sensing transcriptional repressor Rex from Clostridium novyi (strain NT).